A 25-amino-acid chain; its full sequence is C-reactive protein P2 subunit 4 (25 aa).

The Pentraxin (PTX) domain occupies 1–25; it reads GRSLVFPEETANSFVELFPAKELSL.

The protein belongs to the pentraxin family. Heteropentamer. Discoid arrangement of 5 non-covalently bound subunits 1, 2, 3 and 4. Requires Ca(2+) as cofactor. In terms of processing, glycosylated.

Its subcellular location is the secreted. Its function is as follows. Displays several functions associated with host defense: it promotes agglutination, bacterial capsular swelling, phagocytosis, and complement fixation through its calcium-dependent binding to phosphorylcholine. This Gadus morhua (Atlantic cod) protein is C-reactive protein P2 subunit 4.